We begin with the raw amino-acid sequence, 1476 residues long: ABC-type transporter frbG (1476 aa).

Transmembrane regions (helical) follow at residues 26–46 (LLFEEAVLAAVPLGLCVVLAL), 64–84 (LYYAKLTALFLLASVQLVQLI), 97–117 (SIAIAAVSFASTIVFIGLCHL), 122–142 (SAKPSDLLTLYFVTCIAFDII), and 146–166 (TLWIVSGGTAVASTFTVGLVL). Asn-244 carries N-linked (GlcNAc...) asparagine glycosylation. Transmembrane regions (helical) follow at residues 266–286 (FLAGVLPRLALTGFTFAQPFL), 302–322 (AGATGTWLIVAYAGVYIGIAI), 380–400 (LQTMHQAWASFVDICLATWLL), and 409–429 (IPSVGFSLLCVVFGGGVAVMA). One can recognise an ABC transmembrane type-1 1 domain in the interval 274–553 (LALTGFTFAQ…FVHSAVNLML (280 aa)). Asn-464 is a glycosylation site (N-linked (GlcNAc...) asparagine). 2 consecutive transmembrane segments (helical) span residues 487–507 (CLVFMVSLTYLSNVFAPIIGF) and 533–553 (IFALLTEGVGSFVHSAVNLML). The region spanning 619 to 845 (IQARDTNIGW…VTAHVHNQTS (227 aa)) is the ABC transporter 1 domain. 652–659 (GPTNSGKS) is a binding site for ATP. Asn-694, Asn-776, Asn-805, and Asn-842 each carry an N-linked (GlcNAc...) asparagine glycan. 5 helical membrane passes run 898-918 (AVFLALCMALVFAMVFPSIWV), 936-956 (YLLVYFFLGVAALIALIGGGS), 1017-1037 (LFAFITCIAQAIVVCVSSPFV), 1121-1141 (LGLVLDLVVAGIAILLAIVIV), and 1151-1171 (GFLGIALTSLVSFGLNLGGFI). In terms of domain architecture, ABC transmembrane type-1 2 spans 898 to 1179 (AVFLALCMAL…FIGGWTGLET (282 aa)). Positions 1216 to 1447 (IVFDDVTASY…LSSSSPTSSP (232 aa)) constitute an ABC transporter 2 domain. An N-linked (GlcNAc...) asparagine glycan is attached at Asn-1235. ATP is bound at residue 1250 to 1257 (GRTGSGKS).

It belongs to the ABC transporter superfamily. ABCC family. Conjugate transporter (TC 3.A.1.208) subfamily.

The protein resides in the cell membrane. Its function is as follows. ABC-type transporter; part of the gene cluster that mediates the biosynthesis of the antifungal antibiotic FR901469, an inhibitor of beta-1,3-glucansynthase, exerting antifungal activity against the pathogenes Candida albicans and Aspergillus fumigatus. FR901469 is a cyclic depsipeptide containing 12 amino acid residues and a fatty acid chain. Probably involved in the secretion of FR901469. The protein is ABC-type transporter frbG of Dothideomycetidae sp. (strain 11243) (Fungal sp. (strain No.11243)).